We begin with the raw amino-acid sequence, 160 residues long: Probable nucleoside diphosphate kinase DDB_G0292928 (160 aa).

ATP is bound by residues lysine 12, phenylalanine 61, arginine 103, threonine 109, arginine 122, and asparagine 132. Histidine 135 functions as the Pros-phosphohistidine intermediate in the catalytic mechanism.

This sequence belongs to the NDK family. Requires Mg(2+) as cofactor.

It catalyses the reaction a 2'-deoxyribonucleoside 5'-diphosphate + ATP = a 2'-deoxyribonucleoside 5'-triphosphate + ADP. The catalysed reaction is a ribonucleoside 5'-diphosphate + ATP = a ribonucleoside 5'-triphosphate + ADP. The sequence is that of Probable nucleoside diphosphate kinase DDB_G0292928 from Dictyostelium discoideum (Social amoeba).